The following is a 1003-amino-acid chain: Helicase-like transcription factor (1003 aa).

R27 carries the omega-N-methylarginine modification. Residues 38–287 (EFQDIIPPDD…FSVKERPENV (250 aa)) are DNA-binding. K112 participates in a covalent cross-link: Glycyl lysine isopeptide (Lys-Gly) (interchain with G-Cter in SUMO2). At Y195 the chain carries Phosphotyrosine; by JAK2. K211 participates in a covalent cross-link: Glycyl lysine isopeptide (Lys-Gly) (interchain with G-Cter in SUMO2). 294-301 (DDMGLGKT) contributes to the ATP binding site. The interval 317-373 (PLLSKRGKKNHPGKEYKDETIKRRGSNMDKKEDGHSESSTCGEEPSISGTPEKSSCT) is disordered. Residues 328–352 (PGKEYKDETIKRRGSNMDKKEDGHS) are compositionally biased toward basic and acidic residues. Polar residues predominate over residues 353-373 (ESSTCGEEPSISGTPEKSSCT). Phosphoserine occurs at positions 394, 395, and 397. The region spanning 433–600 (DSKFALTFFA…WSLLSFLKLK (168 aa)) is the Helicase ATP-binding domain. The short motif at 551–554 (DEGH) is the DEGH box element. T730 carries the post-translational modification Phosphothreonine. The RING-type zinc-finger motif lies at 754–795 (CAICLDSLTFPVITHCAHVFCKPCICQVIHSEQPHAKCPLCR). Positions 831-990 (ALMHALIELR…TKKTDANDMK (160 aa)) constitute a Helicase C-terminal domain. The interaction with SP1 and SP3 stretch occupies residues 919–1003 (SRVFLMDPAW…INEIRTLIDL (85 aa)).

This sequence belongs to the SNF2/RAD54 helicase family. RAD16 subfamily. In terms of assembly, interacts with SP1 and SP3 independently of DNA; the interaction with these transcriptional factors may be required for basal transcription of target genes. Interacts with EGR1; the interaction requires prior binding to DNA and represses c-Rel via a DNA looping mechanism. Interacts with GATA4. Interacts with PCNA; the interaction promotes polyubiquitination of PCNA through association with the UBE2B-RAD18 and UBE2V2-UBE2N ubiquitin ligase complexes. Interacts with RAD18, SHPRH, UBE2V2 and UBE2N. Expressed in brain, heart, kidney, liver, lung, pancreas, placenta and skeletal muscle.

Its subcellular location is the cytoplasm. The protein resides in the nucleus. It is found in the nucleolus. It localises to the nucleoplasm. The enzyme catalyses S-ubiquitinyl-[E2 ubiquitin-conjugating enzyme]-L-cysteine + [acceptor protein]-L-lysine = [E2 ubiquitin-conjugating enzyme]-L-cysteine + N(6)-ubiquitinyl-[acceptor protein]-L-lysine.. It participates in protein modification; protein ubiquitination. Functionally, has both helicase and E3 ubiquitin ligase activities. Possesses intrinsic ATP-dependent nucleosome-remodeling activity. This activity may be required for transcriptional activation or repression of specific target promoters. These may include the SERPINE1, to which this protein can bind directly. Plays a role in error-free postreplication repair (PRR) of damaged DNA and maintains genomic stability through acting as a ubiquitin ligase for 'Lys-63'-linked polyubiquitination of chromatin-bound PCNA. This chain is Helicase-like transcription factor (Hltf), found in Mus musculus (Mouse).